Here is a 185-residue protein sequence, read N- to C-terminus: Large ribosomal subunit protein uL5 (185 aa).

The protein belongs to the universal ribosomal protein uL5 family. Part of the 50S ribosomal subunit; part of the 5S rRNA/L5/L18/L25 subcomplex. Contacts the 5S rRNA and the P site tRNA. Forms a bridge to the 30S subunit in the 70S ribosome.

Functionally, this is one of the proteins that bind and probably mediate the attachment of the 5S RNA into the large ribosomal subunit, where it forms part of the central protuberance. In the 70S ribosome it contacts protein S13 of the 30S subunit (bridge B1b), connecting the 2 subunits; this bridge is implicated in subunit movement. Contacts the P site tRNA; the 5S rRNA and some of its associated proteins might help stabilize positioning of ribosome-bound tRNAs. The protein is Large ribosomal subunit protein uL5 of Bacteroides thetaiotaomicron (strain ATCC 29148 / DSM 2079 / JCM 5827 / CCUG 10774 / NCTC 10582 / VPI-5482 / E50).